Here is a 353-residue protein sequence, read N- to C-terminus: Elongation factor Ts (353 aa).

The interval T80–V83 is involved in Mg(2+) ion dislocation from EF-Tu.

It belongs to the EF-Ts family.

The protein localises to the cytoplasm. Associates with the EF-Tu.GDP complex and induces the exchange of GDP to GTP. It remains bound to the aminoacyl-tRNA.EF-Tu.GTP complex up to the GTP hydrolysis stage on the ribosome. The sequence is that of Elongation factor Ts from Sulfurovum sp. (strain NBC37-1).